Consider the following 335-residue polypeptide: Glycerol-3-phosphate dehydrogenase [NAD(P)+] (335 aa).

Residues Ser10, Phe11, Arg31, and Lys105 each coordinate NADPH. 3 residues coordinate sn-glycerol 3-phosphate: Lys105, Gly136, and Ser138. Ala140 contributes to the NADPH binding site. Sn-glycerol 3-phosphate is bound by residues Lys191, Asp244, Ser254, Arg255, and Asn256. The active-site Proton acceptor is the Lys191. Residue Arg255 participates in NADPH binding. Val279 and Glu281 together coordinate NADPH.

The protein belongs to the NAD-dependent glycerol-3-phosphate dehydrogenase family.

The protein localises to the cytoplasm. It catalyses the reaction sn-glycerol 3-phosphate + NAD(+) = dihydroxyacetone phosphate + NADH + H(+). The catalysed reaction is sn-glycerol 3-phosphate + NADP(+) = dihydroxyacetone phosphate + NADPH + H(+). It participates in membrane lipid metabolism; glycerophospholipid metabolism. Functionally, catalyzes the reduction of the glycolytic intermediate dihydroxyacetone phosphate (DHAP) to sn-glycerol 3-phosphate (G3P), the key precursor for phospholipid synthesis. In Leptospira interrogans serogroup Icterohaemorrhagiae serovar copenhageni (strain Fiocruz L1-130), this protein is Glycerol-3-phosphate dehydrogenase [NAD(P)+].